A 116-amino-acid chain; its full sequence is Cuticle protein AM1274 (116 aa).

Position 1 is a pyrrolidone carboxylic acid (Gln-1). A disordered region spans residues 1–22 (QLANEPPIEIIRQESTDNGDGN). The Chitin-binding type R&amp;R domain maps to 20-85 (DGNFNFLFET…PVSDFIPTPH (66 aa)). Thr-83 carries an O-linked (HexNAc) threonine glycan.

As to expression, arthrodial membrane.

The chain is Cuticle protein AM1274 from Cancer pagurus (Rock crab).